Reading from the N-terminus, the 70-residue chain is Sporulation protein YhaL (70 aa).

The chain crosses the membrane as a helical span at residues F3–V23. The interval M48 to A70 is disordered.

It localises to the cell membrane. In terms of biological role, required for efficient sporulation. In Bacillus subtilis (strain 168), this protein is Sporulation protein YhaL (yhaL).